Consider the following 268-residue polypeptide: MSFQDLESGRGRSTRKFNGGRQDSTQAVASGIFQINTGVSTFQRLVNTLGTPKDTPELREKLHKTRLHIGQLVKDTSAKLKEASETDHQSGVNPSKKIADAKLARDFQAVLKEFQKAQQTAAERETTYTPFVPQSALPSSYTAGEVDKVPEQRAQLQESKRQELVLLDNEIAFNEAVIEEREQGIQEIHQQIGEVNEIFKDLAVLVNDQGVMIDDIGTHIDNSRAATSQGKSQLVQAAKTQKSNSSLTCLLLVIFGIVLLIVIIVLAA.

A disordered region spans residues 1 to 23 (MSFQDLESGRGRSTRKFNGGRQD). N-acetylserine is present on S2. Topologically, residues 2-246 (SFQDLESGRG…AAKTQKSNSS (245 aa)) are cytoplasmic. In terms of domain architecture, t-SNARE coiled-coil homology spans 175 to 237 (EAVIEEREQG…SQGKSQLVQA (63 aa)). The helical; Anchor for type IV membrane protein transmembrane segment at 247–267 (LTCLLLVIFGIVLLIVIIVLA) threads the bilayer. A topological domain (vesicular) is located at residue A268.

This sequence belongs to the syntaxin family. Interacts with VTI11 and SYP51 to form a t-SNARE complex, but not with VPS45. As to expression, expressed in roots, leaves, stems, flower and green siliques.

The protein localises to the prevacuolar compartment membrane. It localises to the vacuole membrane. In terms of biological role, may provide the t-SNARE function in the vacuolar assembly. Promotes the formation of vacuolar membrane 'bulbs'. Required for inflorescence stem gravitropism. This is Syntaxin-22 (SYP22) from Arabidopsis thaliana (Mouse-ear cress).